Reading from the N-terminus, the 268-residue chain is Shikimate kinase (268 aa).

70-80 (PSGYGLKSSSA) contacts ATP.

The protein belongs to the GHMP kinase family. Archaeal shikimate kinase subfamily.

Its subcellular location is the cytoplasm. The enzyme catalyses shikimate + ATP = 3-phosphoshikimate + ADP + H(+). The protein operates within metabolic intermediate biosynthesis; chorismate biosynthesis; chorismate from D-erythrose 4-phosphate and phosphoenolpyruvate: step 5/7. The chain is Shikimate kinase (aroK) from Thermoplasma acidophilum (strain ATCC 25905 / DSM 1728 / JCM 9062 / NBRC 15155 / AMRC-C165).